A 142-amino-acid polypeptide reads, in one-letter code: Transcription antitermination protein NusB (142 aa).

The protein belongs to the NusB family.

Functionally, involved in transcription antitermination. Required for transcription of ribosomal RNA (rRNA) genes. Binds specifically to the boxA antiterminator sequence of the ribosomal RNA (rrn) operons. The protein is Transcription antitermination protein NusB of Streptomyces coelicolor (strain ATCC BAA-471 / A3(2) / M145).